A 233-amino-acid polypeptide reads, in one-letter code: Biosynthetic peptidoglycan transglycosylase (233 aa).

Residues 8–28 form a helical membrane-spanning segment; the sequence is LIALPVGIFIFFNAYVYGNII.

This sequence belongs to the glycosyltransferase 51 family.

Its subcellular location is the cell inner membrane. It catalyses the reaction [GlcNAc-(1-&gt;4)-Mur2Ac(oyl-L-Ala-gamma-D-Glu-L-Lys-D-Ala-D-Ala)](n)-di-trans,octa-cis-undecaprenyl diphosphate + beta-D-GlcNAc-(1-&gt;4)-Mur2Ac(oyl-L-Ala-gamma-D-Glu-L-Lys-D-Ala-D-Ala)-di-trans,octa-cis-undecaprenyl diphosphate = [GlcNAc-(1-&gt;4)-Mur2Ac(oyl-L-Ala-gamma-D-Glu-L-Lys-D-Ala-D-Ala)](n+1)-di-trans,octa-cis-undecaprenyl diphosphate + di-trans,octa-cis-undecaprenyl diphosphate + H(+). The protein operates within cell wall biogenesis; peptidoglycan biosynthesis. Functionally, peptidoglycan polymerase that catalyzes glycan chain elongation from lipid-linked precursors. The sequence is that of Biosynthetic peptidoglycan transglycosylase from Neisseria meningitidis serogroup B (strain ATCC BAA-335 / MC58).